Reading from the N-terminus, the 512-residue chain is Histidine ammonia-lyase (512 aa).

The segment at residues Ala-144–Gly-146 is a cross-link (5-imidazolinone (Ala-Gly)). Residue Ser-145 is modified to 2,3-didehydroalanine (Ser).

Belongs to the PAL/histidase family. Contains an active site 4-methylidene-imidazol-5-one (MIO), which is formed autocatalytically by cyclization and dehydration of residues Ala-Ser-Gly.

The protein resides in the cytoplasm. It carries out the reaction L-histidine = trans-urocanate + NH4(+). It functions in the pathway amino-acid degradation; L-histidine degradation into L-glutamate; N-formimidoyl-L-glutamate from L-histidine: step 1/3. This is Histidine ammonia-lyase from Desulfotalea psychrophila (strain LSv54 / DSM 12343).